Here is a 90-residue protein sequence, read N- to C-terminus: MIKKSFISVISHEEKEKNRGSVTFQILSLTNRIRKLSSHLELHRKDYLSQRGLRKILGKRQRMLSYLSKNNRIRYKELINQLDIRESKTR.

Belongs to the universal ribosomal protein uS15 family. In terms of assembly, part of the 30S ribosomal subunit.

It localises to the plastid. Its subcellular location is the chloroplast. The sequence is that of Small ribosomal subunit protein uS15c (rps15) from Morus indica (Mulberry).